Here is a 684-residue protein sequence, read N- to C-terminus: Cyclic nucleotide-gated channel alpha-1 (684 aa).

Residues 1–161 (MKTNIINTWH…PSGNTYYNWL (161 aa)) lie on the Cytoplasmic side of the membrane. The interval 34–145 (ACSSFSDDDN…TKEKKEEEKK (112 aa)) is disordered. A compositionally biased stretch (acidic residues) spans 39–54 (SDDDNGSLSEESENED). Residues 105 to 145 (SKADDKNENKKDPEKKKKKEKEKEKKKKEEKTKEKKEEEKK) are compositionally biased toward basic and acidic residues. The chain crosses the membrane as a helical span at residues 162–183 (FCITLPVMYNWTMIIARACFDE). Residues 184–193 (LQSDYLEYWL) are Extracellular-facing. The chain crosses the membrane as a helical span at residues 194-214 (IFDYVSDVVYLADMFVRTRTG). Topologically, residues 215 to 239 (YLEQGLLVKDRMKLIEKYKANLQFK) are cytoplasmic. A helical membrane pass occupies residues 240–258 (LDVLSVIPTDLLYIKFGWN). The Extracellular segment spans residues 259 to 263 (YPEIR). A helical membrane pass occupies residues 264–282 (LNRLLRISRMFEFFQRTET). Residues 283-289 (RTNYPNI) lie on the Cytoplasmic side of the membrane. The ion conduction pathway stretch occupies residues 287–395 (PNIFRISNLV…GNIGSMISNM (109 aa)). A helical transmembrane segment spans residues 290 to 313 (FRISNLVMYIVIIIHWNACVYYSI). Over 314–336 (SKAIGFGNDTWVYPDVNDPEFGR) the chain is Extracellular. N-linked (GlcNAc...) asparagine glycosylation occurs at Asn321. 2 helical membrane passes run 337-371 (LARK…IFVV) and 372-396 (VDFL…SNMN). The tract at residues 354 to 357 (TIGE) is selectivity filter. Residues 397-473 (AARAEFQSRV…DTLKKVRIFA (77 aa)) are C-linker. Residues 397 to 684 (AARAEFQSRV…ESELTESLQD (288 aa)) are Cytoplasmic-facing. Positions 477–597 (AGLLVELVLK…EEKGRQILMK (121 aa)) are cyclic nucleotide-binding domain. 3',5'-cyclic GMP contacts are provided by Gly537, Ser540, Arg553, and Thr554. Arg553 and Thr554 together coordinate 3',5'-cyclic AMP. Residues 615-669 (LEEKVTRMEGSVDLLQTRFARILAEYESMQQKLKQRLTKVEKFLKPLIETEFSAL) are a coiled coil.

Belongs to the cyclic nucleotide-gated cation channel (TC 1.A.1.5) family. CNGA1 subfamily. In terms of assembly, forms heterotetrameric channels composed of CNGA1 and CNGB1 subunits with 3:1 stoichiometry. May also form cyclic nucleotide-activated homotetrameric channels, that are efficiently activated by saturating cGMP, but poorly activated by saturating cAMP compared to the heterotetramer with CNGB1. The channel binds Ca(2+)-bound CALM1 via CaM1 and CaM2 regions of the CNGB1 subunit; this interaction modulates the affinity of the channel for cNMPs in response to intracellular Ca(2+) levels. As to expression, rod cells in the retina and inner medulla of kidney.

It localises to the cell membrane. It carries out the reaction Ca(2+)(in) = Ca(2+)(out). The enzyme catalyses Na(+)(in) = Na(+)(out). The catalysed reaction is K(+)(in) = K(+)(out). It catalyses the reaction NH4(+)(in) = NH4(+)(out). It carries out the reaction Rb(+)(in) = Rb(+)(out). The enzyme catalyses Li(+)(in) = Li(+)(out). The catalysed reaction is Cs(+)(in) = Cs(+)(out). In terms of biological role, pore-forming subunit of the rod cyclic nucleotide-gated channel. Mediates rod photoresponses at dim light converting transient changes in intracellular cGMP levels into electrical signals. In the dark, cGMP levels are high and keep the channel open enabling a steady inward current carried by Na(+) and Ca(2+) ions that leads to membrane depolarization and neurotransmitter release from synaptic terminals. Upon photon absorption cGMP levels decline leading to channel closure and membrane hyperpolarization that ultimately slows neurotransmitter release and signals the presence of light, the end point of the phototransduction cascade. Conducts cGMP- and cAMP-gated ion currents, with permeability for monovalent and divalent cations. The selectivity for Ca(2+) over Na(+) increases with cGMP concentrations, whereas the selectivity among monovalent ions is independent of the cGMP levels. The chain is Cyclic nucleotide-gated channel alpha-1 (Cnga1) from Mus musculus (Mouse).